The following is a 349-amino-acid chain: tRNA-specific 2-thiouridylase MnmA (349 aa).

ATP contacts are provided by residues 7–14 (GLSGGVDS) and Leu33. Cys94 functions as the Nucleophile in the catalytic mechanism. A disulfide bridge connects residues Cys94 and Cys193. Position 119 (Gly119) interacts with ATP. The segment at 143–145 (KDQ) is interaction with tRNA. Cys193 (cysteine persulfide intermediate) is an active-site residue. Residues 298–299 (RY) form an interaction with tRNA region.

Belongs to the MnmA/TRMU family.

It localises to the cytoplasm. It catalyses the reaction S-sulfanyl-L-cysteinyl-[protein] + uridine(34) in tRNA + AH2 + ATP = 2-thiouridine(34) in tRNA + L-cysteinyl-[protein] + A + AMP + diphosphate + H(+). Its function is as follows. Catalyzes the 2-thiolation of uridine at the wobble position (U34) of tRNA, leading to the formation of s(2)U34. The sequence is that of tRNA-specific 2-thiouridylase MnmA from Rippkaea orientalis (strain PCC 8801 / RF-1) (Cyanothece sp. (strain PCC 8801)).